The chain runs to 469 residues: Bile acid receptor (469 aa).

A Glycyl lysine isopeptide (Lys-Gly) (interchain with G-Cter in SUMO1) cross-link involves residue Lys-119. The segment at residues 121–196 (DELCVVCGDR…MGMLAECLLT (76 aa)) is a DNA-binding region (nuclear receptor). The NR C4-type zinc-finger motif lies at 124-144 (CVVCGDRASGYHYNALTCEGC). Ser-132 and Ser-151 each carry phosphoserine; by PKC/PRKCA. N6-acetyllysine; by EP300 is present on Lys-154. Residues 160 to 184 (CKNGGNCVMDMYMRRKCQDCRLRKC) form an NR C4-type zinc finger. The residue at position 203 (Lys-203) is an N6-methyllysine; by SETD7. N6-acetyllysine; by EP300 is present on Lys-210. In terms of domain architecture, NR LBD spans 245 to 469 (DQQTLLDYIM…PLLCEIWDVQ (225 aa)). A Glycyl lysine isopeptide (Lys-Gly) (interchain with G-Cter in SUMO1) cross-link involves residue Lys-272. Residue Arg-328 coordinates 3beta,7beta-dihydroxy-5beta-cholan-24-oate. Residues Arg-328, Tyr-358, and Tyr-366 each coordinate chenodeoxycholate. A 3beta,7beta-dihydroxy-5beta-cholan-24-oate-binding site is contributed by Tyr-366. At Thr-439 the chain carries Phosphothreonine; by PKC/PRKCZ. His-444 contributes to the chenodeoxycholate binding site.

It belongs to the nuclear hormone receptor family. NR1 subfamily. In terms of assembly, heterodimer with RXRA; the heterodimerization enhances the binding affinity for LXXLL motifs from coactivators. Binds DNA predominantly as a heterodimer with RXRA. After activation by agonist binding interacts with coactivators. Interacts with NCOA1, NCOA2, PPARGC1A, CARM1, SETD7, PRMT1, GPS2, SMARCA4 and MED1, EP300 and SMARCD1. Interacts with XRCC5 and XRCC6; decreasing NR1H4/FXR transactivation activity towards ABCB11/BSEP. Interacts with PAGR1 AND NCOA6; indicative for an association with an MLL2/MLL3 complex (ASCOM). Acetylated by EP300. Lys-210 as is the major acetylation site for EP300; the dynamicly regulated acetylation inhibits heterodimerization with RXRA and transactivation activity. Deacetylated by SIRT1. Post-translationally, methylation may increase transactivation of target genes. In terms of processing, phosphorylation by PKC/PRKCA increases transactivation activity by promoting association with PPARGC1A. Sumoylated upon ligand binding.

The protein localises to the nucleus. Ligand-activated transcription factor. Receptor for bile acids (BAs) such as chenodeoxycholic acid (CDCA), lithocholic acid, deoxycholic acid (DCA) and allocholic acid (ACA). Plays a essential role in BA homeostasis through the regulation of genes involved in BA synthesis, conjugation and enterohepatic circulation. Also regulates lipid and glucose homeostasis and is involved innate immune response. The FXR-RXR heterodimer binds predominantly to farnesoid X receptor response elements (FXREs) containing two inverted repeats of the consensus sequence 5'-AGGTCA-3' in which the monomers are spaced by 1 nucleotide (IR-1) but also to tandem repeat DR1 sites with lower affinity, and can be activated by either FXR or RXR-specific ligands. It is proposed that monomeric nuclear receptors such as NR5A2/LRH-1 bound to coregulatory nuclear responsive element (NRE) halfsites located in close proximity to FXREs modulate transcriptional activity. In the liver activates transcription of the corepressor NR0B2 thereby indirectly inhibiting CYP7A1 and CYP8B1 (involved in BA synthesis) implicating at least in part histone demethylase KDM1A resulting in epigenomic repression, and SLC10A1/NTCP (involved in hepatic uptake of conjugated BAs). Activates transcription of the repressor MAFG (involved in regulation of BA synthesis). Activates transcription of SLC27A5/BACS and BAAT (involved in BA conjugation), ABCB11/BSEP (involved in bile salt export) by directly recruiting histone methyltransferase CARM1, and ABCC2/MRP2 (involved in secretion of conjugated BAs) and ABCB4 (involved in secretion of phosphatidylcholine in the small intestine). Activates transcription of SLC27A5/BACS and BAAT (involved in BA conjugation), ABCB11/BSEP (involved in bile salt export) by directly recruiting histone methyltransferase CARM1, and ABCC2/MRP2 (involved in secretion of conjugated BAs) and ABCB4 (involved in secretion of phosphatidylcholine in the small intestine). In the intestine activates FGF19 expression and secretion leading to hepatic CYP7A1 repression. The function also involves the coordinated induction of hepatic KLB/beta-klotho expression. Regulates transcription of liver UGT2B4 and SULT2A1 involved in BA detoxification; binding to the UGT2B4 promoter seems to imply a monomeric transactivation independent of RXRA. Modulates lipid homeostasis by activating liver NR0B2/SHP-mediated repression of SREBF1 (involved in de novo lipogenesis), expression of PLTP (involved in HDL formation), SCARB1 (involved in HDL hepatic uptake), APOE, APOC1, APOC4, PPARA (involved in beta-oxidation of fatty acids), VLDLR and SDC1 (involved in the hepatic uptake of LDL and IDL remnants), and inhibiting expression of MTTP (involved in VLDL assembly). Increases expression of APOC2 (promoting lipoprotein lipase activity implicated in triglyceride clearance). Transrepresses APOA1 involving a monomeric competition with NR2A1 for binding to a DR1 element. Also reduces triglyceride clearance by inhibiting expression of ANGPTL3 and APOC3 (both involved in inhibition of lipoprotein lipase). Involved in glucose homeostasis by modulating hepatic gluconeogenesis through activation of NR0B2/SHP-mediated repression of respective genes. Modulates glycogen synthesis (inducing phosphorylation of glycogen synthase kinase-3). Modulates glucose-stimulated insulin secretion and is involved in insulin resistance. Involved in intestinal innate immunity. Plays a role in protecting the distal small intestine against bacterial overgrowth and preservation of the epithelial barrier. Down-regulates inflammatory cytokine expression in several types of immune cells including macrophages and mononuclear cells. Mediates trans-repression of TLR4-induced cytokine expression; the function seems to require its sumoylation and prevents N-CoR nuclear receptor corepressor clearance from target genes such as IL1B and NOS2. Involved in the TLR9-mediated protective mechanism in intestinal inflammation. Plays an anti-inflammatory role in liver inflammation; proposed to inhibit pro-inflammatory (but not antiapoptotic) NF-kappa-B signaling. The protein is Bile acid receptor (Nr1h4) of Rattus norvegicus (Rat).